The primary structure comprises 595 residues: Isoprene synthase, chloroplastic (595 aa).

The transit peptide at Met-1–Arg-37 directs the protein to the chloroplast. Asp-345 contributes to the dimethylallyl diphosphate binding site. Mg(2+) contacts are provided by Asp-345 and Asp-349. Positions Asp-345–Asp-349 match the DDXXD motif motif. Glu-423, Arg-486, and Asn-489 together coordinate dimethylallyl diphosphate. Mg(2+) is bound by residues Asn-489, Ser-493, and Glu-497.

It belongs to the terpene synthase family. Tpsb subfamily. Mg(2+) serves as cofactor. Mn(2+) is required as a cofactor.

Its subcellular location is the plastid. It localises to the chloroplast. It carries out the reaction dimethylallyl diphosphate = isoprene + diphosphate. Lyase that catalyzes the formation of isoprene from dimethylallyl diphosphate. This is Isoprene synthase, chloroplastic (ISPS) from Populus tremuloides (Quaking aspen).